We begin with the raw amino-acid sequence, 132 residues long: Large ribosomal subunit protein uL24 (132 aa).

Belongs to the universal ribosomal protein uL24 family. Part of the 50S ribosomal subunit.

In terms of biological role, one of two assembly initiator proteins, it binds directly to the 5'-end of the 23S rRNA, where it nucleates assembly of the 50S subunit. One of the proteins that surrounds the polypeptide exit tunnel on the outside of the subunit. This is Large ribosomal subunit protein uL24 from Synechococcus sp. (strain JA-3-3Ab) (Cyanobacteria bacterium Yellowstone A-Prime).